Consider the following 151-residue polypeptide: Probable cGMP 3',5'-cyclic phosphodiesterase subunit delta (151 aa).

This sequence belongs to the PDE6D/unc-119 family. As to quaternary structure, interacts with Pde6.

The protein localises to the nucleus. It is found in the cytoplasm. This chain is Probable cGMP 3',5'-cyclic phosphodiesterase subunit delta, found in Aedes aegypti (Yellowfever mosquito).